The primary structure comprises 421 residues: UDP-N-acetylglucosamine 1-carboxyvinyltransferase (421 aa).

Phosphoenolpyruvate is bound at residue 22–23 (KN). Arginine 93 provides a ligand contact to UDP-N-acetyl-alpha-D-glucosamine. Cysteine 117 functions as the Proton donor in the catalytic mechanism. Cysteine 117 is modified (2-(S-cysteinyl)pyruvic acid O-phosphothioketal). Residues 122-126 (RPVDL), aspartate 308, and leucine 330 contribute to the UDP-N-acetyl-alpha-D-glucosamine site.

The protein belongs to the EPSP synthase family. MurA subfamily.

It localises to the cytoplasm. The catalysed reaction is phosphoenolpyruvate + UDP-N-acetyl-alpha-D-glucosamine = UDP-N-acetyl-3-O-(1-carboxyvinyl)-alpha-D-glucosamine + phosphate. It participates in cell wall biogenesis; peptidoglycan biosynthesis. Its function is as follows. Cell wall formation. Adds enolpyruvyl to UDP-N-acetylglucosamine. The sequence is that of UDP-N-acetylglucosamine 1-carboxyvinyltransferase from Helicobacter hepaticus (strain ATCC 51449 / 3B1).